An 896-amino-acid chain; its full sequence is Trehalose-phosphatase (896 aa).

The interval 1–554 (MTTTAQDNSP…SNDDMERKMT (554 aa)) is glycosyltransferase.

This sequence in the N-terminal section; belongs to the glycosyltransferase 20 family. It in the C-terminal section; belongs to the trehalose phosphatase family. The trehalose synthase complex is composed of the two catalytic subunits TPS1 and TPS2, and at least one of the two regulatory subunits TPS3 or TSL1. Mg(2+) serves as cofactor.

It is found in the cytoplasm. The catalysed reaction is alpha,alpha-trehalose 6-phosphate + H2O = alpha,alpha-trehalose + phosphate. It functions in the pathway carbohydrate biosynthesis. With respect to regulation, inhibited by EDTA. Functionally, phosphatase catalytic subunit of the trehalose synthase complex that catalyzes the production of trehalose from glucose-6-phosphate and UDP-alpha-D-glucose in a two step process. The sequence is that of Trehalose-phosphatase from Saccharomyces cerevisiae (strain ATCC 204508 / S288c) (Baker's yeast).